The sequence spans 1046 residues: Probable inorganic carbon transporter subunit DabA1 (1046 aa).

Positions 462, 464, 721, and 736 each coordinate Zn(2+).

It belongs to the inorganic carbon transporter (TC 9.A.2) DabA family. In terms of assembly, forms a complex with DabB1. Requires Zn(2+) as cofactor.

It is found in the cell inner membrane. Part of an energy-coupled inorganic carbon pump. The chain is Probable inorganic carbon transporter subunit DabA1 from Halothiobacillus neapolitanus (strain ATCC 23641 / c2) (Thiobacillus neapolitanus).